A 353-amino-acid polypeptide reads, in one-letter code: Small ribosomal subunit biogenesis GTPase RsgA (353 aa).

Residues 1-17 (MSKNKLSKGQQRRVNAN) show a composition bias toward polar residues. The tract at residues 1-25 (MSKNKLSKGQQRRVNANHQRRLKTT) is disordered. A CP-type G domain is found at 104-274 (ASVLTRPDFY…VIDSPGVREF (171 aa)). Residues 160-163 (NKID) and 214-222 (GQSGVGKSS) each bind GTP. Zn(2+) contacts are provided by Cys-298, Cys-303, His-305, and Cys-311.

Belongs to the TRAFAC class YlqF/YawG GTPase family. RsgA subfamily. Monomer. Associates with 30S ribosomal subunit, binds 16S rRNA. Requires Zn(2+) as cofactor.

The protein localises to the cytoplasm. One of several proteins that assist in the late maturation steps of the functional core of the 30S ribosomal subunit. Helps release RbfA from mature subunits. May play a role in the assembly of ribosomal proteins into the subunit. Circularly permuted GTPase that catalyzes slow GTP hydrolysis, GTPase activity is stimulated by the 30S ribosomal subunit. In Klebsiella pneumoniae (strain 342), this protein is Small ribosomal subunit biogenesis GTPase RsgA.